The sequence spans 316 residues: Type II restriction enzyme BsuBI (316 aa).

Belongs to the BsuBI/PstI type II restriction endonuclease family. Homodimer. It depends on Mg(2+) as a cofactor.

The enzyme catalyses Endonucleolytic cleavage of DNA to give specific double-stranded fragments with terminal 5'-phosphates.. Its function is as follows. A P subtype restriction enzyme that recognizes the double-stranded sequence 5'-CTGCAG-3' and cleaves after A-5. The sequence is that of Type II restriction enzyme BsuBI (hsdBR) from Bacillus subtilis.